The chain runs to 251 residues: Flap endonuclease Xni (251 aa).

Aspartate 104 is a Mg(2+) binding site. Residues 160 to 249 form the 5'-3' exonuclease domain; it reads VTPEQLADYW…LDGNLQQLRL (90 aa). Residues leucine 171, alanine 172, proline 180, valine 182, and isoleucine 185 each contribute to the K(+) site. Positions 184-189 are interaction with DNA; that stretch reads GIGPKS.

The protein belongs to the Xni family. The cofactor is Mg(2+). Requires K(+) as cofactor.

Has flap endonuclease activity. During DNA replication, flap endonucleases cleave the 5'-overhanging flap structure that is generated by displacement synthesis when DNA polymerase encounters the 5'-end of a downstream Okazaki fragment. This Klebsiella pneumoniae subsp. pneumoniae (strain ATCC 700721 / MGH 78578) protein is Flap endonuclease Xni.